Reading from the N-terminus, the 681-residue chain is Proline-rich receptor-like protein kinase PERK8 (681 aa).

Residues 1–11 (MSLVPPLPILS) show a composition bias toward pro residues. The disordered stretch occupies residues 1-231 (MSLVPPLPIL…TLPSSSPGKS (231 aa)). Topologically, residues 1 to 237 (MSLVPPLPIL…PGKSEVGTGG (237 aa)) are extracellular. Asn16 carries an N-linked (GlcNAc...) asparagine glycan. The span at 21 to 163 (APPPLQTQPT…SPPKPSPSTP (143 aa)) shows a compositional bias: pro residues. Low complexity predominate over residues 177 to 191 (TSASPPSSNPTDPST). The segment covering 192–201 (LAPPPTPLPV) has biased composition (pro residues). The segment covering 214–229 (PASNNGNNTLPSSSPG) has biased composition (polar residues). Asn220 carries N-linked (GlcNAc...) asparagine glycosylation. A helical transmembrane segment spans residues 238–258 (IVAIGVIVGLVFLSLFVMGVW). The Cytoplasmic segment spans residues 259 to 681 (FTRKRKRKDP…GSRDQSRFVP (423 aa)). The 279-residue stretch at 339 to 617 (FSEKNLLGEG…SQVVRALDTL (279 aa)) folds into the Protein kinase domain. ATP contacts are provided by residues 345–353 (LGEGGFGCV) and Lys367. A Phosphotyrosine modification is found at Tyr412. Asp463 functions as the Proton acceptor in the catalytic mechanism. Ser467 and Ser498 each carry phosphoserine. 2 positions are modified to phosphothreonine: Thr499 and Thr504. Position 512 is a phosphotyrosine (Tyr512).

Belongs to the protein kinase superfamily. Ser/Thr protein kinase family. Interacts with KIPK1 and KIPK2 (via its cytosolic domain). Mostly expressed in seedlings, roots, inflorescence bolts and flower buds.

It is found in the cell membrane. It catalyses the reaction L-seryl-[protein] + ATP = O-phospho-L-seryl-[protein] + ADP + H(+). The enzyme catalyses L-threonyl-[protein] + ATP = O-phospho-L-threonyl-[protein] + ADP + H(+). Functionally, could be involved in the negative regulation of root growth. The sequence is that of Proline-rich receptor-like protein kinase PERK8 (PERK8) from Arabidopsis thaliana (Mouse-ear cress).